A 495-amino-acid polypeptide reads, in one-letter code: Calcium-dependent protein kinase 11 (495 aa).

A Protein kinase domain is found at 26 to 284 (YLLGKKLGQG…AHEALCHPWI (259 aa)). ATP is bound by residues 32-40 (LGQGQFGTT) and Lys55. Asp150 acts as the Proton acceptor in catalysis. Ser190 is subject to Phosphoserine. Residues 290–320 (APDKPLDPAVLSRLKQFSQMNKIKKMALRVI) form an autoinhibitory domain region. 4 EF-hand domains span residues 327-362 (EEIG…VGSE), 363-398 (LMES…MNKM), 399-434 (EREE…FGLC), and 438-468 (LDDM…GDGV). The Ca(2+) site is built by Asp340, Asp342, Ser344, Thr346, Glu351, Asp376, Asp378, Ser380, Thr382, Glu387, Asp412, Asp414, Ser416, Tyr418, Glu423, Asp446, Asp448, Asp450, Lys452, and Glu457.

It belongs to the protein kinase superfamily. Ser/Thr protein kinase family. CDPK subfamily. Interacts with Di19.

The protein localises to the cytoplasm. Its subcellular location is the nucleus. It catalyses the reaction L-seryl-[protein] + ATP = O-phospho-L-seryl-[protein] + ADP + H(+). It carries out the reaction L-threonyl-[protein] + ATP = O-phospho-L-threonyl-[protein] + ADP + H(+). Its activity is regulated as follows. Activated by calcium. Autophosphorylation may play an important role in the regulation of the kinase activity. Its function is as follows. May play a role in signal transduction pathways that involve calcium as a second messenger. Functions as a regulator of the calcium-mediated abscisic acid (ABA) signaling pathway. Phosphorylates ABA-responsive transcription factors ABF1 and ABF4 in vitro. The chain is Calcium-dependent protein kinase 11 (CPK11) from Arabidopsis thaliana (Mouse-ear cress).